A 259-amino-acid chain; its full sequence is Glutathione S-transferase domain-containing protein DDB_G0274705 (259 aa).

In terms of domain architecture, GST N-terminal spans 7–96; the sequence is KIDYIFYTNN…YLAQKFNTFL (90 aa). Residues 102–232 enclose the GST C-terminal domain; sequence NPLENSEVIT…GFKNFNPSLL (131 aa).

It belongs to the GST superfamily.

The protein is Glutathione S-transferase domain-containing protein DDB_G0274705 of Dictyostelium discoideum (Social amoeba).